We begin with the raw amino-acid sequence, 646 residues long: Microtubule-associated protein 9 (646 aa).

Residue Ser-2 is modified to N-acetylserine. Tyr-12 is subject to Phosphotyrosine. Disordered regions lie at residues Asp-75–Glu-226, Ser-242–Asp-418, Arg-491–Ala-511, Arg-531–Asp-554, Leu-570–Gln-597, and Lys-609–Phe-646. Composition is skewed to polar residues over residues Ala-105–Asp-119 and Arg-157–Gly-167. Positions Ser-188–Ile-204 are enriched in basic and acidic residues. Composition is skewed to polar residues over residues Ser-205–Leu-222, Leu-280–Leu-291, and Pro-330–Thr-340. Positions Glu-346–Thr-357 are enriched in basic and acidic residues. Positions Thr-386–Tyr-398 are enriched in polar residues. Basic and acidic residues predominate over residues Leu-405–Asp-418. The stretch at Met-442–Lys-596 forms a coiled coil. Over residues Pro-637–Phe-646 the composition is skewed to polar residues.

Binds to purified microtubules via its C-terminus.

The protein localises to the cytoplasm. The protein resides in the cytoskeleton. It is found in the spindle. Its function is as follows. Involved in organization of the bipolar mitotic spindle. Required for bipolar spindle assembly, mitosis progression and cytokinesis. May act by stabilizing interphase microtubules. The polypeptide is Microtubule-associated protein 9 (Map9) (Mus musculus (Mouse)).